The primary structure comprises 125 residues: Cu-Zn superoxide dismutase-like protein (125 aa).

Cysteines 52 and 102 form a disulfide.

The protein belongs to the Cu-Zn superoxide dismutase family.

The protein localises to the host cytoplasm. Its function is as follows. Virion protein with no enzymatic activity. The polypeptide is Cu-Zn superoxide dismutase-like protein (Bos taurus (Bovine)).